Here is a 265-residue protein sequence, read N- to C-terminus: Type III pantothenate kinase (265 aa).

17–24 (DIGNTSIS) lines the ATP pocket. A substrate-binding site is contributed by 114–117 (GSDV). Aspartate 116 (proton acceptor) is an active-site residue. Aspartate 137 contacts K(+). Threonine 140 is a binding site for ATP. Residue threonine 192 coordinates substrate.

This sequence belongs to the type III pantothenate kinase family. In terms of assembly, homodimer. NH4(+) is required as a cofactor. Requires K(+) as cofactor.

It is found in the cytoplasm. The catalysed reaction is (R)-pantothenate + ATP = (R)-4'-phosphopantothenate + ADP + H(+). Its pathway is cofactor biosynthesis; coenzyme A biosynthesis; CoA from (R)-pantothenate: step 1/5. Catalyzes the phosphorylation of pantothenate (Pan), the first step in CoA biosynthesis. The sequence is that of Type III pantothenate kinase from Borrelia hermsii (strain HS1 / DAH).